A 234-amino-acid polypeptide reads, in one-letter code: 3-dehydroquinate dehydratase (234 aa).

3-dehydroquinate contacts are provided by residues 33–35 (EWR) and Arg68. The Proton donor/acceptor role is filled by His124. The active-site Schiff-base intermediate with substrate is Lys151. 3 residues coordinate 3-dehydroquinate: Arg193, Ser214, and Gln218.

The protein belongs to the type-I 3-dehydroquinase family. As to quaternary structure, homodimer.

The catalysed reaction is 3-dehydroquinate = 3-dehydroshikimate + H2O. It functions in the pathway metabolic intermediate biosynthesis; chorismate biosynthesis; chorismate from D-erythrose 4-phosphate and phosphoenolpyruvate: step 3/7. In terms of biological role, involved in the third step of the chorismate pathway, which leads to the biosynthesis of aromatic amino acids. Catalyzes the cis-dehydration of 3-dehydroquinate (DHQ) and introduces the first double bond of the aromatic ring to yield 3-dehydroshikimate. This Syntrophobacter fumaroxidans (strain DSM 10017 / MPOB) protein is 3-dehydroquinate dehydratase.